Here is a 97-residue protein sequence, read N- to C-terminus: Co-chaperonin GroES (97 aa).

The protein belongs to the GroES chaperonin family. Heptamer of 7 subunits arranged in a ring. Interacts with the chaperonin GroEL.

The protein resides in the cytoplasm. Functionally, together with the chaperonin GroEL, plays an essential role in assisting protein folding. The GroEL-GroES system forms a nano-cage that allows encapsulation of the non-native substrate proteins and provides a physical environment optimized to promote and accelerate protein folding. GroES binds to the apical surface of the GroEL ring, thereby capping the opening of the GroEL channel. This Azotobacter vinelandii (strain DJ / ATCC BAA-1303) protein is Co-chaperonin GroES.